A 293-amino-acid polypeptide reads, in one-letter code: DegV domain-containing protein MG326 homolog (293 aa).

A DegV domain is found at 3-289 (TAIITDSTAS…IDAFSISLLL (287 aa)). The hexadecanoate site is built by threonine 62 and serine 94.

May bind long-chain fatty acids, such as palmitate, and may play a role in lipid transport or fatty acid metabolism. In Mycoplasma pneumoniae (strain ATCC 29342 / M129 / Subtype 1) (Mycoplasmoides pneumoniae), this protein is DegV domain-containing protein MG326 homolog.